Consider the following 472-residue polypeptide: Methanethiol oxidase (472 aa).

N-acetylalanine is present on alanine 2. A phosphoserine mark is found at serine 111, serine 371, and serine 467.

It belongs to the selenium-binding protein family. In terms of assembly, interacts with USP33. Phosphorylated. Post-translationally, the N-terminus is blocked. Widely expressed. Highly expressed in liver, lung, colon, prostate, kidney and pancreas. In brain, present both in neurons and glia (at protein level). Down-regulated in lung adenocarcinoma, colorectal carcinoma and ovarian cancer. Two-fold up-regulated in brain and blood from schizophrenia patients.

The protein localises to the nucleus. Its subcellular location is the cytoplasm. It is found in the cytosol. It localises to the membrane. The catalysed reaction is methanethiol + O2 + H2O = hydrogen sulfide + formaldehyde + H2O2 + H(+). It functions in the pathway organosulfur degradation. Its function is as follows. Catalyzes the oxidation of methanethiol, an organosulfur compound known to be produced in substantial amounts by gut bacteria. Selenium-binding protein which may be involved in the sensing of reactive xenobiotics in the cytoplasm. May be involved in intra-Golgi protein transport. This chain is Methanethiol oxidase (SELENBP1), found in Homo sapiens (Human).